Reading from the N-terminus, the 167-residue chain is MATEVHNLQELRRSASLATKVFIQRDYSDGTICQFQTKFPPELDSRIERQLFEETVKTLNGFYAEAEKIGGSSYLEGCLACATAYFIFLCMETHYEKVLKKISRYIQEQNEKVFAPRGLLLTDPVERGMRVIEISIYEDRCSSGSSSSGSSSGSGSSSAGGGGAGAR.

S-palmitoyl cysteine attachment occurs at residues Cys-78 and Cys-81. Positions 140–167 (RCSSGSSSSGSSSGSGSSSAGGGGAGAR) are disordered. Residues 142–157 (SSGSSSSGSSSGSGSS) show a composition bias toward low complexity. Gly residues predominate over residues 158 to 167 (SAGGGGAGAR).

The protein belongs to the ERF4 family. In terms of processing, palmitoylated by ZDHHC5. Palmitoylation is required for the maintenance of ZDHHC5 at the plasma membrane.

It localises to the cell membrane. The protein localises to the golgi apparatus membrane. Play a role in cell adhesion by regulating the plasma membrane localization of the palmitoyltransferase ZDHHC5. May be involved in protein transport from Golgi to cell surface. The chain is Golgin subfamily A member 7B (GOLGA7B) from Mus musculus (Mouse).